A 593-amino-acid chain; its full sequence is Probable translation initiation factor IF-2 (593 aa).

The 215-residue stretch at 7-221 (IRTPIVCVMG…VLIGLAQRYM (215 aa)) folds into the tr-type G domain. Positions 16 to 23 (GHVDHGKT) are G1. Residue 16 to 23 (GHVDHGKT) coordinates GTP. The G2 stretch occupies residues 41–45 (EITQH). The interval 77–80 (DTPG) is G3. GTP-binding positions include 77 to 81 (DTPGH) and 131 to 134 (NKVD). The segment at 131-134 (NKVD) is G4. The interval 199–201 (SAL) is G5.

This sequence belongs to the TRAFAC class translation factor GTPase superfamily. Classic translation factor GTPase family. IF-2 subfamily.

In terms of biological role, function in general translation initiation by promoting the binding of the formylmethionine-tRNA to ribosomes. Seems to function along with eIF-2. This is Probable translation initiation factor IF-2 from Methanoculleus marisnigri (strain ATCC 35101 / DSM 1498 / JR1).